Here is a 430-residue protein sequence, read N- to C-terminus: Adenylosuccinate synthetase (430 aa).

Residues 12-18 and 40-42 contribute to the GTP site; these read GDEGKGK and GHT. The Proton acceptor role is filled by aspartate 13. Residues aspartate 13 and glycine 40 each contribute to the Mg(2+) site. IMP-binding positions include 13 to 16, 38 to 41, threonine 128, arginine 142, glutamine 223, threonine 238, and arginine 302; these read DEGK and NAGH. The active-site Proton donor is the histidine 41. 298–304 is a binding site for substrate; the sequence is TTTGRPR. GTP is bound by residues arginine 304, 330 to 332, and 412 to 414; these read SID and SVG.

It belongs to the adenylosuccinate synthetase family. As to quaternary structure, homodimer. Mg(2+) is required as a cofactor.

It localises to the cytoplasm. The enzyme catalyses IMP + L-aspartate + GTP = N(6)-(1,2-dicarboxyethyl)-AMP + GDP + phosphate + 2 H(+). It functions in the pathway purine metabolism; AMP biosynthesis via de novo pathway; AMP from IMP: step 1/2. Functionally, plays an important role in the de novo pathway of purine nucleotide biosynthesis. Catalyzes the first committed step in the biosynthesis of AMP from IMP. This is Adenylosuccinate synthetase from Streptococcus pyogenes serotype M2 (strain MGAS10270).